A 166-amino-acid chain; its full sequence is Endoribonuclease YbeY (166 aa).

3 residues coordinate Zn(2+): histidine 130, histidine 134, and histidine 140.

Belongs to the endoribonuclease YbeY family. Zn(2+) is required as a cofactor.

The protein resides in the cytoplasm. Single strand-specific metallo-endoribonuclease involved in late-stage 70S ribosome quality control and in maturation of the 3' terminus of the 16S rRNA. The sequence is that of Endoribonuclease YbeY from Streptococcus uberis (strain ATCC BAA-854 / 0140J).